Consider the following 122-residue polypeptide: Large ribosomal subunit protein uL18 (122 aa).

Residues methionine 1–arginine 11 show a composition bias toward basic and acidic residues. Residues methionine 1–isoleucine 22 form a disordered region. Residues aspartate 12–isoleucine 22 are compositionally biased toward basic residues.

Belongs to the universal ribosomal protein uL18 family. Part of the 50S ribosomal subunit; part of the 5S rRNA/L5/L18/L25 subcomplex. Contacts the 5S and 23S rRNAs.

Its function is as follows. This is one of the proteins that bind and probably mediate the attachment of the 5S RNA into the large ribosomal subunit, where it forms part of the central protuberance. This is Large ribosomal subunit protein uL18 from Pelotomaculum thermopropionicum (strain DSM 13744 / JCM 10971 / SI).